Consider the following 202-residue polypeptide: N-(5'-phosphoribosyl)anthranilate isomerase (202 aa).

Belongs to the TrpF family.

It carries out the reaction N-(5-phospho-beta-D-ribosyl)anthranilate = 1-(2-carboxyphenylamino)-1-deoxy-D-ribulose 5-phosphate. It functions in the pathway amino-acid biosynthesis; L-tryptophan biosynthesis; L-tryptophan from chorismate: step 3/5. This Listeria monocytogenes serovar 1/2a (strain ATCC BAA-679 / EGD-e) protein is N-(5'-phosphoribosyl)anthranilate isomerase.